The following is a 189-amino-acid chain: Peptidyl-tRNA hydrolase (189 aa).

Tyrosine 15 serves as a coordination point for tRNA. The active-site Proton acceptor is the histidine 20. 3 residues coordinate tRNA: phenylalanine 66, asparagine 68, and asparagine 114.

It belongs to the PTH family. Monomer.

It is found in the cytoplasm. The enzyme catalyses an N-acyl-L-alpha-aminoacyl-tRNA + H2O = an N-acyl-L-amino acid + a tRNA + H(+). In terms of biological role, hydrolyzes ribosome-free peptidyl-tRNAs (with 1 or more amino acids incorporated), which drop off the ribosome during protein synthesis, or as a result of ribosome stalling. Functionally, catalyzes the release of premature peptidyl moieties from peptidyl-tRNA molecules trapped in stalled 50S ribosomal subunits, and thus maintains levels of free tRNAs and 50S ribosomes. The polypeptide is Peptidyl-tRNA hydrolase (Streptococcus pyogenes serotype M3 (strain ATCC BAA-595 / MGAS315)).